A 168-amino-acid polypeptide reads, in one-letter code: ATP synthase subunit b (168 aa).

The chain crosses the membrane as a helical span at residues 13-33; it reads WTFLFQTLNLLVVMGLLYVFL.

Belongs to the ATPase B chain family. F-type ATPases have 2 components, F(1) - the catalytic core - and F(0) - the membrane proton channel. F(1) has five subunits: alpha(3), beta(3), gamma(1), delta(1), epsilon(1). F(0) has three main subunits: a(1), b(2) and c(10-14). The alpha and beta chains form an alternating ring which encloses part of the gamma chain. F(1) is attached to F(0) by a central stalk formed by the gamma and epsilon chains, while a peripheral stalk is formed by the delta and b chains.

It localises to the cell membrane. F(1)F(0) ATP synthase produces ATP from ADP in the presence of a proton or sodium gradient. F-type ATPases consist of two structural domains, F(1) containing the extramembraneous catalytic core and F(0) containing the membrane proton channel, linked together by a central stalk and a peripheral stalk. During catalysis, ATP synthesis in the catalytic domain of F(1) is coupled via a rotary mechanism of the central stalk subunits to proton translocation. Its function is as follows. Component of the F(0) channel, it forms part of the peripheral stalk, linking F(1) to F(0). This chain is ATP synthase subunit b, found in Moorella thermoacetica (strain ATCC 39073 / JCM 9320).